The primary structure comprises 429 residues: Glucose-1-phosphate adenylyltransferase (429 aa).

Residues G162, 177 to 178 (EK), and S209 contribute to the alpha-D-glucose 1-phosphate site.

It belongs to the bacterial/plant glucose-1-phosphate adenylyltransferase family. In terms of assembly, homotetramer.

The catalysed reaction is alpha-D-glucose 1-phosphate + ATP + H(+) = ADP-alpha-D-glucose + diphosphate. Its pathway is glycan biosynthesis; glycogen biosynthesis. In terms of biological role, involved in the biosynthesis of ADP-glucose, a building block required for the elongation reactions to produce glycogen. Catalyzes the reaction between ATP and alpha-D-glucose 1-phosphate (G1P) to produce pyrophosphate and ADP-Glc. The polypeptide is Glucose-1-phosphate adenylyltransferase (Trichormus variabilis (strain ATCC 29413 / PCC 7937) (Anabaena variabilis)).